The following is a 116-amino-acid chain: MQPGGDMSALLAQAQQMQQKLLETQQQLANAQVHGQGGGGLVEVVVKGSGEVVSVAIDPKVVDPGDIETLQDLIVGAMADASKQVTKLAQERLGALTSAMRPTAPPPTPPTYMAGT.

The disordered stretch occupies residues Leu-96–Thr-116.

The protein belongs to the YbaB/EbfC family. In terms of assembly, homodimer.

The protein resides in the cytoplasm. It localises to the nucleoid. In terms of biological role, binds to DNA and alters its conformation. May be involved in regulation of gene expression, nucleoid organization and DNA protection. This chain is Nucleoid-associated protein MLBr02330, found in Mycobacterium leprae (strain Br4923).